We begin with the raw amino-acid sequence, 334 residues long: MKKNQFLKESDVTAESVFFMKRRQVLKALGISAAAFSLPHAAHADLLSWFKGNDRPPAPAGKPLEFSKPAAWQNNLPLTPADKVSGYNNFYEFGLDKADPAANAGSLKTDPWTLKISGEVAKPLTLDHDDLTRRFPLEERIYRMRCVEAWSMVVPWIGFPLHKLLALAEPTSNAKYVAFETIYAPEQMPGQQDRFIGGGLKYPYVEGLRLDEAMHPLTLMTVGVYGKALPPQNGAPVRLIVPWKYGFKGIKSIVSIKLTRERPPTTWNLAAPDEYGFYANVNPHVDHPRWSQATERFIGSGGILDVQRQPTLLFNGYADQVASLYRGLDLRENF.

A signal peptide (tat-type signal) is located at residues 1–44; that stretch reads MKKNQFLKESDVTAESVFFMKRRQVLKALGISAAAFSLPHAAHA. Residues Asn-88, 91 to 92, Cys-146, Thr-181, Asn-233, Arg-238, and 249 to 251 contribute to the Mo-molybdopterin site; these read YE and GIK.

It belongs to the MsrP family. In terms of assembly, heterodimer of a catalytic subunit (MsrP) and a heme-binding subunit (MsrQ). The cofactor is Mo-molybdopterin. In terms of processing, predicted to be exported by the Tat system. The position of the signal peptide cleavage has not been experimentally proven.

It localises to the periplasm. It carries out the reaction L-methionyl-[protein] + a quinone + H2O = L-methionyl-(S)-S-oxide-[protein] + a quinol. The enzyme catalyses L-methionyl-[protein] + a quinone + H2O = L-methionyl-(R)-S-oxide-[protein] + a quinol. Functionally, part of the MsrPQ system that repairs oxidized periplasmic proteins containing methionine sulfoxide residues (Met-O), using respiratory chain electrons. Thus protects these proteins from oxidative-stress damage caused by reactive species of oxygen and chlorine generated by the host defense mechanisms. MsrPQ is essential for the maintenance of envelope integrity under bleach stress, rescuing a wide series of structurally unrelated periplasmic proteins from methionine oxidation, including the primary periplasmic chaperone SurA and the lipoprotein Pal. The catalytic subunit MsrP is non-stereospecific, being able to reduce both (R-) and (S-) diastereoisomers of methionine sulfoxide. In Escherichia coli O7:K1 (strain IAI39 / ExPEC), this protein is Protein-methionine-sulfoxide reductase catalytic subunit MsrP.